The chain runs to 578 residues: Isocitrate dehydrogenase kinase/phosphatase (578 aa).

ATP is bound by residues 315-321 (APGIRGM) and lysine 336. The active site involves aspartate 371.

This sequence belongs to the AceK family.

The protein localises to the cytoplasm. The catalysed reaction is L-seryl-[isocitrate dehydrogenase] + ATP = O-phospho-L-seryl-[isocitrate dehydrogenase] + ADP + H(+). Bifunctional enzyme which can phosphorylate or dephosphorylate isocitrate dehydrogenase (IDH) on a specific serine residue. This is a regulatory mechanism which enables bacteria to bypass the Krebs cycle via the glyoxylate shunt in response to the source of carbon. When bacteria are grown on glucose, IDH is fully active and unphosphorylated, but when grown on acetate or ethanol, the activity of IDH declines drastically concomitant with its phosphorylation. The sequence is that of Isocitrate dehydrogenase kinase/phosphatase from Escherichia coli O139:H28 (strain E24377A / ETEC).